Here is an 861-residue protein sequence, read N- to C-terminus: Interleukin-12 receptor subunit beta-2 (861 aa).

Positions 1–23 (MARTVCGCSWALIFIIMSLLVKA) are cleaved as a signal peptide. At 24-622 (KIDVCKRGDV…REFCLQGKAN (599 aa)) the chain is on the extracellular side. Residues Asn48, Asn129, Asn166, and Asn271 are each glycosylated (N-linked (GlcNAc...) asparagine). 5 consecutive Fibronectin type-III domains span residues 126 to 224 (QPQN…VVRP), 226 to 317 (PPWD…TQTP), 318 to 415 (EKEP…NIAD), 423 to 520 (APQQ…KHKA), and 521 to 620 (PLSG…LQGK). The short motif at 305-309 (WSDWS) is the WSXWS motif element. N-linked (GlcNAc...) asparagine glycans are attached at residues Asn347, Asn376, and Asn480. Residues 623–643 (WSTFVAPSICIAVITVGVFSM) traverse the membrane as a helical segment. The Cytoplasmic segment spans residues 644 to 861 (RCFRQKVFVL…LKMGCGSLML (218 aa)). The Box 1 motif motif lies at 662–670 (CSREIPDPA). The disordered stretch occupies residues 718–761 (FRRPHHPNWPGKGQRLQGRHASEEDTGSSASSPPPPRALTAETG). At Tyr800 the chain carries Phosphotyrosine.

This sequence belongs to the type I cytokine receptor family. Type 2 subfamily. In terms of assembly, heterodimer/heterooligomer; disulfide-linked. The functional high affinity IL12 receptor is composed of I12RB1 and IL12RB2. Il12RB2 binds JAK2 (via its N-terminal) through a membrane-proximal region of the cytoplasmic domain. In terms of processing, on IL12 stimulation, phosphorylated on C-terminal tyrosine residues.

It localises to the membrane. Functionally, receptor for interleukin-12. This subunit is the signaling component coupling to the JAK2/STAT4 pathway. In Sus scrofa (Pig), this protein is Interleukin-12 receptor subunit beta-2 (IL12RB2).